Here is a 263-residue protein sequence, read N- to C-terminus: MGLMNAFDSQTEDSSPVIGRNLRSRPLARKKLSEMVEEELEQMIRRREFGEGEQLPSERELMAFFNVGRPSVREALAALKRKGLVQINNGERARVSRPSADTIIGELSGMAKDFLSHPGGIAHFEQLRLFFESSLVRYAAEHATDEQIDLLAKALEINSQSLDNNAAFIRSDVDFHRVLAEIPGNPIFMAIHVALLDWLIAARPTVADQALHEHNNVSYQQHIAIVDAIRRHDPDEADRALQSHLNSVSATWHAFGQTTNKKK.

Residues 1–21 form a disordered region; sequence MGLMNAFDSQTEDSSPVIGRN. One can recognise an HTH gntR-type domain in the interval 30–98; it reads KKLSEMVEEE…NGERARVSRP (69 aa). Positions 58–77 form a DNA-binding region, H-T-H motif; sequence ERELMAFFNVGRPSVREALA.

This sequence belongs to the NanR family.

In terms of biological role, transcriptional repressor that controls expression of the genes required for the catabolism of sialic acids. The chain is HTH-type transcriptional repressor NanR from Escherichia coli O7:K1 (strain IAI39 / ExPEC).